The chain runs to 174 residues: Secretion monitor (174 aa).

The N-terminal stretch at 1–35 (MGILNLWRQFGRRYFWSHLLLGVVAASIGAPTILA) is a signal peptide.

This sequence belongs to the SecM family.

It is found in the cytoplasm. The protein resides in the cytosol. Its subcellular location is the periplasm. In terms of biological role, regulates secA expression by translational coupling of the secM secA operon. Translational pausing at a specific Pro residue 5 residues before the end of the protein may allow disruption of a mRNA repressor helix that normally suppresses secA translation initiation. The chain is Secretion monitor from Photorhabdus laumondii subsp. laumondii (strain DSM 15139 / CIP 105565 / TT01) (Photorhabdus luminescens subsp. laumondii).